The chain runs to 312 residues: 2-aminophenol 1,6-dioxygenase subunit beta (312 aa).

Fe cation-binding residues include histidine 13, histidine 62, and glutamate 251.

The protein belongs to the LigB/MhpB extradiol dioxygenase family. In terms of assembly, the APD complex is a heterotetramer of 2 alpha (CnbCa) and 2 beta (CnbCb) subunits. Fe(2+) is required as a cofactor.

It catalyses the reaction 2-aminophenol + O2 = 2-aminomuconate 6-semialdehyde. It carries out the reaction 2-amino-5-chlorophenol + O2 = 2-amino-5-chloromuconate 6-semialdehyde. Its pathway is xenobiotic degradation; nitrobenzene degradation. It participates in xenobiotic degradation; 4-chloronitrobenzene degradation. Its activity is regulated as follows. Complete loss of activity in the presence of Ni(2+), Co(2+), Cd(2+), Zn(2+) and hydrogen peroxide, however activity with hydrogen peroxide partially restored upon addition of excess ascorbate. Partially inhibited by Fe(2+), Mg(2+), Ca(2+), Mn(2+), Cu(2+) and also by EDTA, at 2 mM concentration. Total activity inhibited in the presence of catechol or 4-nitrocatechol but completely restored after removal of catechol and addition of 2 mM Fe(2+) and 5 mM ascorbate. In terms of biological role, component of the 2-aminophenol 1,6-dioxygenase (APD) complex that catalyzes the ring fission of 2-aminophenol to produce 2-aminomuconic semialdehyde. CnbCb seems to be the catalytic subunit of the complex. Also active on other substrates such as 2-amino-5-chlorophenol (68% activity), protocatechuate (33% activity) and catechol (5% activity). Both 2-aminophenol and 2-amino-5-cholorophenol are likely native substrates for this dioxygenase which is involved in the reductive degradation pathway of both nitrobenzene (NB) and 4-chloronitrobenzene (4-CNB), allowing C.testosteroni strain CNB-1 to grow on these compounds as sole source of carbon, nitrogen, and energy. The polypeptide is 2-aminophenol 1,6-dioxygenase subunit beta (Comamonas testosteroni (Pseudomonas testosteroni)).